The chain runs to 102 residues: Antitoxin VapB46 (102 aa).

The protein belongs to the phD/YefM antitoxin family.

In terms of biological role, antitoxin component of a type II toxin-antitoxin (TA) system. Neutralizes the effect of cognate toxin VapC46. This is Antitoxin VapB46 (vapB46) from Mycobacterium tuberculosis (strain CDC 1551 / Oshkosh).